Consider the following 336-residue polypeptide: Vomeronasal type-1 receptor 102 (336 aa).

At 1–42 the chain is on the extracellular side; sequence MVGVQICQGMTSEILFFSLQPQFSNMMNKNSRLHIDSNIRNT. A helical transmembrane segment spans residues 43-63; sequence FFTEIGIGVSANSLLLLFNIF. Over 64 to 75 the chain is Cytoplasmic; the sequence is KFIHGQRSRLTD. A helical transmembrane segment spans residues 76–96; it reads LPIGLLSLINLLMLLIMACIA. Residues 97 to 120 are Extracellular-facing; sequence TDIFISCRRWDDIICKSLLYLYRT. A disulfide bond links Cys111 and Cys198. The helical transmembrane segment at 121-140 threads the bilayer; the sequence is FRGLSLSTTCLLSVLQAIIL. Over 141 to 157 the chain is Cytoplasmic; the sequence is SPRSSCLAKYKHKPPHH. The helical transmembrane segment at 158–178 threads the bilayer; sequence IFCAMLFLSVLYMFISSHLLL. Residues 179-213 are Extracellular-facing; the sequence is SIIATPNLTTNDFIHVSQSCSILPMSYLMQSMFST. Asn185 carries N-linked (GlcNAc...) asparagine glycosylation. A helical transmembrane segment spans residues 214–234; it reads LLAIRNVFLISLIVLSTWYMV. Topologically, residues 235–264 are cytoplasmic; sequence ALLCRHRKQTRHLQDTSLSRKASPEQRATR. Residues 265-285 form a helical membrane-spanning segment; sequence SILMLRSLFVLMSIFDSIVSC. Over 286 to 296 the chain is Extracellular; that stretch reads SRTMYLNDPTS. The helical transmembrane segment at 297–317 threads the bilayer; sequence YSIQLLVVHIYATVSPFVFMI. Residues 318–336 are Cytoplasmic-facing; it reads TEKHIVNYLKSMYVRVLNV.

This sequence belongs to the G-protein coupled receptor 1 family. As to expression, expressed in 1-4% of neurons of the vomeronasal organ. Only one pheromone receptor gene may be expressed in a particular neuron. Not expressed in the main olfactory epithelium.

It localises to the cell membrane. Putative pheromone receptor implicated in the regulation of social as well as reproductive behavior. The chain is Vomeronasal type-1 receptor 102 (Vom1r102) from Rattus norvegicus (Rat).